Here is a 329-residue protein sequence, read N- to C-terminus: 4-hydroxythreonine-4-phosphate dehydrogenase (329 aa).

Substrate is bound by residues histidine 136 and threonine 137. A divalent metal cation contacts are provided by histidine 166, histidine 211, and histidine 266. The substrate site is built by lysine 274, asparagine 283, and arginine 292.

It belongs to the PdxA family. As to quaternary structure, homodimer. The cofactor is Zn(2+). Requires Mg(2+) as cofactor. It depends on Co(2+) as a cofactor.

It is found in the cytoplasm. The enzyme catalyses 4-(phosphooxy)-L-threonine + NAD(+) = 3-amino-2-oxopropyl phosphate + CO2 + NADH. It functions in the pathway cofactor biosynthesis; pyridoxine 5'-phosphate biosynthesis; pyridoxine 5'-phosphate from D-erythrose 4-phosphate: step 4/5. Functionally, catalyzes the NAD(P)-dependent oxidation of 4-(phosphooxy)-L-threonine (HTP) into 2-amino-3-oxo-4-(phosphooxy)butyric acid which spontaneously decarboxylates to form 3-amino-2-oxopropyl phosphate (AHAP). The sequence is that of 4-hydroxythreonine-4-phosphate dehydrogenase from Shigella flexneri serotype 5b (strain 8401).